The primary structure comprises 508 residues: ATP synthase subunit alpha, chloroplastic (508 aa).

170–177 (GDRQTGKT) contributes to the ATP binding site.

It belongs to the ATPase alpha/beta chains family. As to quaternary structure, F-type ATPases have 2 components, CF(1) - the catalytic core - and CF(0) - the membrane proton channel. CF(1) has five subunits: alpha(3), beta(3), gamma(1), delta(1), epsilon(1). CF(0) has four main subunits: a, b, b' and c.

Its subcellular location is the plastid. It localises to the chloroplast thylakoid membrane. The enzyme catalyses ATP + H2O + 4 H(+)(in) = ADP + phosphate + 5 H(+)(out). Produces ATP from ADP in the presence of a proton gradient across the membrane. The alpha chain is a regulatory subunit. The chain is ATP synthase subunit alpha, chloroplastic from Lactuca sativa (Garden lettuce).